A 262-amino-acid chain; its full sequence is Phosphomannomutase 1 (262 aa).

A2 is modified (N-acetylalanine). Residue D19 is the Nucleophile of the active site. Mg(2+) is bound by residues D19 and D21. Residue D21 is the Proton donor/acceptor of the active site. 7 residues coordinate alpha-D-mannose 1-phosphate: R28, R132, R143, R150, M186, S188, and D190. Residues N218, Y230, D232, and T235 each contribute to the Mg(2+) site. S242 carries the post-translational modification Phosphoserine.

This sequence belongs to the eukaryotic PMM family. As to quaternary structure, homodimer. Mg(2+) is required as a cofactor. As to expression, present in brain, where it is restricted to neuronal cell bodies. Present at lower levels in pancreas, liver, lung, gonads, uterus, adrenal glands and pituitary (at protein level). Undetectable in intestine.

The protein localises to the cytoplasm. It catalyses the reaction alpha-D-mannose 1-phosphate = D-mannose 6-phosphate. Its pathway is nucleotide-sugar biosynthesis; GDP-alpha-D-mannose biosynthesis; alpha-D-mannose 1-phosphate from D-fructose 6-phosphate: step 2/2. With respect to regulation, IMP, a metabolite whose concentration is elevated in anoxia, inhibits phosphomannomutase and phosphoglucomutase activities and strongly enhances glucose-1,6-bisphosphatase activity. In terms of biological role, involved in the synthesis of the GDP-mannose and dolichol-phosphate-mannose required for a number of critical mannosyl transfer reactions. In addition, may be responsible for the degradation of glucose-1,6-bisphosphate in ischemic brain. The chain is Phosphomannomutase 1 (Pmm1) from Mus musculus (Mouse).